A 161-amino-acid polypeptide reads, in one-letter code: Protein-export protein SecB (161 aa).

Belongs to the SecB family. Homotetramer, a dimer of dimers. One homotetramer interacts with 1 SecA dimer.

The protein resides in the cytoplasm. Functionally, one of the proteins required for the normal export of preproteins out of the cell cytoplasm. It is a molecular chaperone that binds to a subset of precursor proteins, maintaining them in a translocation-competent state. It also specifically binds to its receptor SecA. The protein is Protein-export protein SecB of Pseudomonas putida (strain ATCC 700007 / DSM 6899 / JCM 31910 / BCRC 17059 / LMG 24140 / F1).